A 482-amino-acid polypeptide reads, in one-letter code: ATP synthase subunit beta (482 aa).

162–169 is a binding site for ATP; the sequence is GGAGVGKT.

This sequence belongs to the ATPase alpha/beta chains family. F-type ATPases have 2 components, CF(1) - the catalytic core - and CF(0) - the membrane proton channel. CF(1) has five subunits: alpha(3), beta(3), gamma(1), delta(1), epsilon(1). CF(0) has four main subunits: a(1), b(1), b'(1) and c(9-12).

The protein localises to the cellular thylakoid membrane. The catalysed reaction is ATP + H2O + 4 H(+)(in) = ADP + phosphate + 5 H(+)(out). Its function is as follows. Produces ATP from ADP in the presence of a proton gradient across the membrane. The catalytic sites are hosted primarily by the beta subunits. This chain is ATP synthase subunit beta, found in Synechococcus sp. (strain PCC 6716).